The following is a 352-amino-acid chain: Trifunctional sesterterpene/triterpene/sesquarterpene synthase (352 aa).

Belongs to the large terpene synthase family.

It carries out the reaction (2E,6E,10E,14E)-geranylfarnesyl diphosphate = beta-geranylfarnesene + diphosphate. The enzyme catalyses all-trans-hexaprenyl diphosphate = beta-hexaprene + diphosphate. It catalyses the reaction all-trans-heptaprenyl diphosphate = beta-heptaprene + diphosphate. Catalyzes the conversion of geranylfarnesyl diphosphate (GFPP) and hexaprenyl diphosphate (HexPP) into beta-geranylfarnesene and beta-hexaprene, respectively. Also produces beta-heptaprene from heptaprenyl diphosphate (HepPP) as a minor product. This Shouchella clausii (Alkalihalobacillus clausii) protein is Trifunctional sesterterpene/triterpene/sesquarterpene synthase.